The primary structure comprises 358 residues: Putative pyruvyl transferase EpsI (358 aa).

The protein belongs to the polysaccharide pyruvyl transferase family.

In terms of biological role, may be involved in the production of the exopolysaccharide (EPS) component of the extracellular matrix during biofilm formation. EPS is responsible for the adhesion of chains of cells into bundles. The sequence is that of Putative pyruvyl transferase EpsI (epsI) from Bacillus subtilis (strain 168).